The chain runs to 310 residues: uncharacterized protein (310 aa).

A compositionally biased stretch (basic residues) spans 1–11 (MKVKSILKHSR). Disordered regions lie at residues 1–227 (MKVK…SDHA) and 242–310 (AMEE…NENE). Over residues 12–50 (MSSPSLETDSMESGQQQNMVSSTPSIDMNESDCSGTGTP) the composition is skewed to polar residues. The span at 51 to 80 (SEERIRRLRWDEENLSKAEQQKSAKMKITE) shows a compositional bias: basic and acidic residues. Residues 91–105 (PDDEVPEINLDETDS) are compositionally biased toward acidic residues. Low complexity predominate over residues 110–121 (TAGTLGDTLGTL). 2 stretches are compositionally biased toward basic and acidic residues: residues 126-150 (VSKDSKDDNVSFSSDKKQFYVKKEP) and 182-195 (LPSKKELFPRETKP). A compositionally biased stretch (acidic residues) spans 242-253 (AMEEEALSEAEE). Residues 254 to 265 (NIPKKKPDFNEL) are compositionally biased toward basic and acidic residues. Position 285 is a phosphoserine (Ser285). A compositionally biased stretch (polar residues) spans 297–310 (DSGSASDVNMNENE).

This is an uncharacterized protein from Schizosaccharomyces pombe (strain 972 / ATCC 24843) (Fission yeast).